Here is a 571-residue protein sequence, read N- to C-terminus: Plastidial pyruvate kinase 3, chloroplastic (571 aa).

The N-terminal 55 residues, 1-55 (MAAYGQISSGMTVDPQVLSSSRNIGVSLSPLRRTLIGAGVRSTSISLRQCSLSVR), are a transit peptide targeting the chloroplast. A substrate-binding site is contributed by R129. K(+)-binding residues include N131, S133, D164, and T165. 131–134 (NMSH) serves as a coordination point for ATP. Residue R171 participates in ATP binding. K314 contacts substrate. E316 is a binding site for Mg(2+). Positions 339, 340, and 372 each coordinate substrate. Residue D340 participates in Mg(2+) binding.

Belongs to the pyruvate kinase family. In terms of assembly, oligomer of alpha and beta subunits. It depends on Mg(2+) as a cofactor. K(+) serves as cofactor. Expressed at low levels in roots, leaves, inflorescences, siliques, pollen, seeds and flowers.

It localises to the plastid. Its subcellular location is the chloroplast stroma. The enzyme catalyses pyruvate + ATP = phosphoenolpyruvate + ADP + H(+). It participates in carbohydrate degradation; glycolysis; pyruvate from D-glyceraldehyde 3-phosphate: step 5/5. In terms of biological role, required for plastidial pyruvate kinase activity. The protein is Plastidial pyruvate kinase 3, chloroplastic (PKP3) of Arabidopsis thaliana (Mouse-ear cress).